Reading from the N-terminus, the 119-residue chain is UPF0145 protein Bcep18194_B0595 (119 aa).

This sequence belongs to the UPF0145 family.

This Burkholderia lata (strain ATCC 17760 / DSM 23089 / LMG 22485 / NCIMB 9086 / R18194 / 383) protein is UPF0145 protein Bcep18194_B0595.